The sequence spans 506 residues: Anaerobic nitric oxide reductase transcription regulator NorR (506 aa).

At D57 the chain carries 4-aspartylphosphate. Residues 187–416 (MIGLSPAMTQ…LEHAIHRAVV (230 aa)) enclose the Sigma-54 factor interaction domain. ATP-binding positions include 215 to 222 (GETGTGKE) and 278 to 287 (ADNGTLFLDE). The H-T-H motif DNA-binding region spans 481-500 (WAASARALETDVANLHRLAK).

It functions in the pathway nitrogen metabolism; nitric oxide reduction. Functionally, required for the expression of anaerobic nitric oxide (NO) reductase, acts as a transcriptional activator for at least the norVW operon. Activation also requires sigma-54. The sequence is that of Anaerobic nitric oxide reductase transcription regulator NorR from Salmonella paratyphi A (strain ATCC 9150 / SARB42).